The following is a 3674-amino-acid chain: Dystrophin (3674 aa).

The actin-binding stretch occupies residues 1-236 (MSEVSSDERE…YVTSLFQVLP (236 aa)). Calponin-homology (CH) domains follow at residues 11 to 115 (DVQK…LHWQ) and 130 to 236 (TNSE…QVLP). The interval 59-68 (PKEKGSTRVH) is ANK2- and ANK-3 binding. Over residues 306-318 (SDPTRSPFPSQRL) the composition is skewed to polar residues. Residues 306–325 (SDPTRSPFPSQRLESPEDKS) are disordered. Spectrin repeat units follow at residues 335–443 (VNLD…NLHK), 444–552 (VLMD…LLQD), 555–663 (LKWQ…QISQ), 715–824 (EIRK…WLEY), 826–930 (NRII…ELQI), 939–1041 (RYQE…KLEE), 1044–1150 (AKLR…ALKG), 1153–1259 (DKTI…TLEE), 1262–1363 (ACWH…LLEQ), 1364–1459 (SIQS…LFQK), 1464–1564 (EQRL…QLEK), 1567–1672 (KLSR…LLLE), 1675–1774 (KHME…KASI), 1775–1870 (PLKE…KALE), 1873–1975 (HQWY…TVHE), 1988–2097 (EISY…KFDR), 2100–2204 (EKWR…RLEE), 2207–2314 (NILS…EIEA), 2315–2412 (HIKD…LRAK), 2464–2566 (FNRA…QLNE), 2569–2675 (KDST…VLEE), 2678–2791 (RLLQ…HLEA), 2797–2919 (KRLH…RKID), and 2924–3029 (RLQE…QLHE). Positions 1411–1909 (SDLTSHEISL…PEPQDEKKIK (499 aa)) are interaction with SYNM. In terms of domain architecture, WW spans 3044–3077 (TSVQGPWERAISPNKVPYYINHETQTTCWDHPKM). The interval 3047–3397 (QGPWERAISP…TVLEGDNMET (351 aa)) is interaction with SYNM. Residues 3297 to 3353 (KHQAKCNICKECPIIGFRYRSLKHFNYDICQSCFFSGRVAKGHKMHYPMVEYCTPTT) form a ZZ-type; degenerate zinc finger. Residues Cys-3302, Cys-3305, Cys-3326, and Cys-3329 each coordinate Zn(2+). The segment at 3455–3507 (DDEHLLIQHYCQSLNQDSPLSQPRSPAQILISLESEERGELERILADLEEENR) is binds to SNTB1. A phosphoserine mark is found at Ser-3472, Ser-3479, and Ser-3489. Disordered stretches follow at residues 3517-3543 (KQQHEHKGLSPLPSPPEMMPTSPQSPR) and 3590-3674 (QAEA…EDTM). Composition is skewed to polar residues over residues 3596–3615 (NGTTVSSPSTSLQRSDSSQP) and 3651–3662 (QLNNSFPSSRGR). Phosphoserine is present on residues Ser-3601, Ser-3602, Ser-3606, Ser-3612, Ser-3613, and Ser-3655.

Interacts with SYNM. Interacts with the syntrophins SNTG1 and SNTG2. Interacts with KRT19. Component of the dystrophin-associated glycoprotein complex which is composed of three subcomplexes: a cytoplasmic complex comprised of DMD (or UTRN), DTNA and a number of syntrophins, such as SNTB1, SNTB2, SNTG1 and SNTG2, the transmembrane dystroglycan complex, and the sarcoglycan-sarcospan complex. Interacts with DAG1 (betaDAG1) with DMD; the interaction is inhibited by phosphorylation on the PPXY motif of DAG1. Interacts with SYNM; SNTA1 and SNTB1. Interacts with CMYA5. Directly interacts with ANK2 and ANK3; these interactions do not interfere with betaDAG1-binding and are necessary for proper localization in muscle cells. Identified in a dystroglycan complex that contains at least PRX, DRP2, UTRN, DMD and DAG1. Interacts with DTNB. Interacts with PGM5; the interaction is direct. Interacts with NOS1; localizes NOS1 to sarcolemma in muscle cells. In terms of tissue distribution, in the retina, expressed in the outer plexiform layer (OPL) and around the blood vessels. Also observed at the vitreal border of the retina corresponding to the inner limiting membrane (ILM). Presynaptically localized in cone pedicles and postsynaptically in bipolar cells (at protein level).

The protein resides in the cell membrane. Its subcellular location is the sarcolemma. The protein localises to the cytoplasm. It is found in the cytoskeleton. It localises to the postsynaptic cell membrane. Its function is as follows. Anchors the extracellular matrix to the cytoskeleton via F-actin. Ligand for dystroglycan. Component of the dystrophin-associated glycoprotein complex which accumulates at the neuromuscular junction (NMJ) and at a variety of synapses in the peripheral and central nervous systems and has a structural function in stabilizing the sarcolemma. Also implicated in signaling events and synaptic transmission. The polypeptide is Dystrophin (Sus scrofa (Pig)).